The sequence spans 175 residues: Probable DNA-directed RNA polymerase subunit delta (175 aa).

An HTH HARE-type domain is found at 14–81; the sequence is CSMIEVVHSV…GENRWGLRSW (68 aa). The tract at residues 91 to 175 is disordered; sequence ILPQPKPKKK…DETEEEEEEL (85 aa). Acidic residues predominate over residues 106 to 175; that stretch reads DGFDDYIEED…DETEEEEEEL (70 aa).

This sequence belongs to the RpoE family. RNAP is composed of a core of 2 alpha, a beta and a beta' subunits. The core is associated with a delta subunit and one of several sigma factors.

Its function is as follows. Participates in both the initiation and recycling phases of transcription. In the presence of the delta subunit, RNAP displays an increased specificity of transcription, a decreased affinity for nucleic acids, and an increased efficiency of RNA synthesis because of enhanced recycling. The chain is Probable DNA-directed RNA polymerase subunit delta from Bacillus anthracis.